Consider the following 521-residue polypeptide: Bifunctional purine biosynthesis protein PurH (521 aa).

Residues 1 to 145 (MIKQALISVS…KNHRDVTVVV (145 aa)) form the MGS-like domain.

Belongs to the PurH family.

The catalysed reaction is (6R)-10-formyltetrahydrofolate + 5-amino-1-(5-phospho-beta-D-ribosyl)imidazole-4-carboxamide = 5-formamido-1-(5-phospho-D-ribosyl)imidazole-4-carboxamide + (6S)-5,6,7,8-tetrahydrofolate. It catalyses the reaction IMP + H2O = 5-formamido-1-(5-phospho-D-ribosyl)imidazole-4-carboxamide. Its pathway is purine metabolism; IMP biosynthesis via de novo pathway; 5-formamido-1-(5-phospho-D-ribosyl)imidazole-4-carboxamide from 5-amino-1-(5-phospho-D-ribosyl)imidazole-4-carboxamide (10-formyl THF route): step 1/1. It participates in purine metabolism; IMP biosynthesis via de novo pathway; IMP from 5-formamido-1-(5-phospho-D-ribosyl)imidazole-4-carboxamide: step 1/1. The polypeptide is Bifunctional purine biosynthesis protein PurH (Paraburkholderia phytofirmans (strain DSM 17436 / LMG 22146 / PsJN) (Burkholderia phytofirmans)).